Consider the following 168-residue polypeptide: Photosystem I assembly protein Ycf3 (168 aa).

TPR repeat units follow at residues 35-68 (AFAYYINGMSAQSEGNYAEALQNYYQAMHLEMDP), 72-105 (SYILYNIGIIHTSNGEHSKALEYYCRAIERNPFL), and 120-153 (GEQAIQQGDSEIAEAWFDQAAEYWKQARTLTPGN).

The protein belongs to the Ycf3 family.

The protein localises to the plastid membrane. Functionally, essential for the assembly of the photosystem I (PSI) complex. May act as a chaperone-like factor to guide the assembly of the PSI subunits. This chain is Photosystem I assembly protein Ycf3, found in Cuscuta gronovii (Common dodder).